Consider the following 726-residue polypeptide: MSPAPDAAPAPASISLFDLSADAPVFQGLSLVSHAPGEALARAPRTSCSGSGERESPERKLLQGPMDISEKLFCSTCDQTFQNHQEQREHYKLDWHRFNLKQRLKDKPLLSALDFEKQSSTGDLSSISGSEDSDSASEEDLQTLDRERATFEKLSRPPGFYPHRVLFQNAQGQFLYAYRCVLGPHQDPPEEAELLLQNLQSRGPRDCVVLMAAAGHFAGAIFQGREVVTHKTFHRYTVRAKRGTAQGLRDARGGPSHSAGANLRRYNEATLYKDVRDLLAGPSWAKALEEAGTILLRAPRSGRSLFFGGKGAPLQRGDPRLWDIPLATRRPTFQELQRVLHKLTTLHVYEEDPREAVRLHSPQTHWKTVREERKKPTEEEIRKICRDEKEALGQNEESPKQGSGSEGEDGFQVELELVELTVGTLDLCESEVLPKRRRRKRNKKEKSRDQEAGAHRTLLQQTQEEEPSTQSSQAVAAPLGPLLDEAKAPGQPELWNALLAACRAGDVGVLKLQLAPSPADPRVLSLLSAPLGSGGFTLLHAAAAAGRGSVVRLLLEAGADPTVQDSRARPPYTVAADKSTRNEFRRFMEKNPDAYDYNKAQVPGPLTPEMEARQATRKREQKAARRQREEQQQRQQEQEEREREEQRRFAALSDREKRALAAERRLAAQLGAPTSPIPDSAIVNTRRCWSCGASLQGLTPFHYLDFSFCSTRCLQDHRRQAGRPSS.

The tract at residues 40 to 61 (LARAPRTSCSGSGERESPERKL) is disordered. Residues 52–61 (GERESPERKL) are compositionally biased toward basic and acidic residues. The C2H2-type zinc finger occupies 72–96 (LFCSTCDQTFQNHQEQREHYKLDWH). A compositionally biased stretch (low complexity) spans 120–130 (STGDLSSISGS). A disordered region spans residues 120 to 141 (STGDLSSISGSEDSDSASEEDL). Residues 131–141 (EDSDSASEEDL) are compositionally biased toward acidic residues. The VLRF1 domain occupies 203-346 (GPRDCVVLMA…QRVLHKLTTL (144 aa)). The active site involves Gln246. A phosphoserine mark is found at Ser258, Ser361, and Ser398. Disordered stretches follow at residues 387–409 (DEKE…EGED) and 436–474 (RRRR…SSQA). Basic residues predominate over residues 436-445 (RRRRKRNKKE). Residues 457–473 (TLLQQTQEEEPSTQSSQ) are compositionally biased toward low complexity. The stretch at 493–526 (ELWNALLAACRAGDVGVLKLQLAPSPADPRVLSL) is one ANK 1 repeat. A Phosphoserine modification is found at Ser533. One copy of the ANK 2 repeat lies at 534-563 (GGFTLLHAAAAAGRGSVVRLLLEAGADPTV). Positions 588 to 656 (MEKNPDAYDY…RRFAALSDRE (69 aa)) are disordered. The residue at position 607 (Thr607) is a Phosphothreonine. Residues 609-659 (EMEARQATRKREQKAARRQREEQQQRQQEQEEREREEQRRFAALSDREKRA) are a coiled coil. A compositionally biased stretch (basic and acidic residues) spans 610–656 (MEARQATRKREQKAARRQREEQQQRQQEQEEREREEQRRFAALSDRE). The tract at residues 654-666 (DREKRALAAERRL) is VCP/p97-interacting motif (VIM). A phosphoserine mark is found at Ser675 and Ser680.

It belongs to the ANKZF1/VMS1 family. As to quaternary structure, interacts (via VIM motif) with VCP.

It is found in the cytoplasm. Its function is as follows. Endonuclease that cleaves polypeptidyl-tRNAs downstream of the ribosome-associated quality control (RQC) pathway to release incompletely synthesized polypeptides for degradation. The RQC pathway disassembles aberrantly stalled translation complexes to recycle or degrade the constituent parts. ANKZF1 acts downstream disassembly of stalled ribosomes and specifically cleaves off the terminal 3'-CCA nucleotides universal to all tRNAs from polypeptidyl-tRNAs, releasing (1) ubiquitinated polypeptides from 60S ribosomal subunit for degradation and (2) cleaved tRNAs. ANKZF1-cleaved tRNAs are then repaired and recycled by ELAC1 and TRNT1. Also plays a role in the cellular response to hydrogen peroxide and in the maintenance of mitochondrial integrity under conditions of cellular stress. This chain is tRNA endonuclease ANKZF1, found in Homo sapiens (Human).